The primary structure comprises 417 residues: Tyrosine--tRNA ligase (417 aa).

Tyr-40 is an L-tyrosine binding site. The 'HIGH' region motif lies at 45-54; the sequence is ATAASLHVGH. The L-tyrosine site is built by Tyr-177 and Gln-181. Residues 237-241 carry the 'KMSKS' region motif; it reads KMGKS. Lys-240 is a binding site for ATP. Residues 351–414 form the S4 RNA-binding domain; it reads ISVVQLITRS…AGRKRHALIK (64 aa).

It belongs to the class-I aminoacyl-tRNA synthetase family. TyrS type 1 subfamily. As to quaternary structure, homodimer.

It is found in the cytoplasm. The catalysed reaction is tRNA(Tyr) + L-tyrosine + ATP = L-tyrosyl-tRNA(Tyr) + AMP + diphosphate + H(+). Catalyzes the attachment of tyrosine to tRNA(Tyr) in a two-step reaction: tyrosine is first activated by ATP to form Tyr-AMP and then transferred to the acceptor end of tRNA(Tyr). The sequence is that of Tyrosine--tRNA ligase from Dinoroseobacter shibae (strain DSM 16493 / NCIMB 14021 / DFL 12).